A 386-amino-acid polypeptide reads, in one-letter code: Cell division protein FtsZ (386 aa).

GTP contacts are provided by residues 20–24, 107–109, glutamate 138, arginine 142, and asparagine 186; these read GGGGN and GTG. The tract at residues 350-377 is disordered; the sequence is LNQEQKTAAKAVNEQNAQGSKEPDYLDI.

Belongs to the FtsZ family. As to quaternary structure, homodimer. Polymerizes to form a dynamic ring structure in a strictly GTP-dependent manner. Interacts directly with several other division proteins.

The protein localises to the cytoplasm. Functionally, essential cell division protein that forms a contractile ring structure (Z ring) at the future cell division site. The regulation of the ring assembly controls the timing and the location of cell division. One of the functions of the FtsZ ring is to recruit other cell division proteins to the septum to produce a new cell wall between the dividing cells. Binds GTP and shows GTPase activity. This chain is Cell division protein FtsZ, found in Sodalis glossinidius.